Here is a 557-residue protein sequence, read N- to C-terminus: Ribonuclease J 2 (557 aa).

4 residues coordinate Zn(2+): His-76, His-78, His-144, and Glu-166. Residue 366–370 (HASSH) coordinates substrate.

It belongs to the metallo-beta-lactamase superfamily. RNA-metabolizing metallo-beta-lactamase-like family. Bacterial RNase J subfamily. In terms of assembly, homodimer. Component of a possible RNA degradosome complex composed of cshA, eno, pfkA, pnp, rnjA, rnjB, rnpA and rny. Interacts specifically with RNase J1. The cofactor is Zn(2+).

The protein resides in the cytoplasm. An RNase that has 5'-3' exonuclease and endonuclease activity, with the exonuclease activity probably being most important in vivo. Involved in maturation of 16S rRNA, rnpB (the RNA component of RNase P) maturation and degradation, and mRNA maturation and/or decay. This subunit probably plays a structural rather than enzymatic role as mutation of its putative active site gives no phenotype, and its deletion is partially complemented by inactive RNase J1. The polypeptide is Ribonuclease J 2 (Staphylococcus aureus (strain NCTC 8325 / PS 47)).